Consider the following 131-residue polypeptide: MRHRKSGRQLNRNSSHRQAMFRNMAGSLVRHEIIKTTVAKAKELRRVVEPLITLAKSDSVANRRLAFARTRDAEVVGKLFTELGPRYQERPGGYTRILKCGLRAGDKAPMAYIELVGRPEAAQAVDVEAAE.

It belongs to the bacterial ribosomal protein bL17 family. As to quaternary structure, part of the 50S ribosomal subunit. Contacts protein L32.

The protein is Large ribosomal subunit protein bL17 of Shewanella baltica (strain OS223).